Reading from the N-terminus, the 327-residue chain is Lipoyl synthase (327 aa).

Residues Cys72, Cys77, Cys83, Cys98, Cys102, Cys105, and Ser313 each contribute to the [4Fe-4S] cluster site. A Radical SAM core domain is found at 83 to 302; that stretch reads CWSHGTATIM…RKVGLEKGFL (220 aa).

This sequence belongs to the radical SAM superfamily. Lipoyl synthase family. [4Fe-4S] cluster serves as cofactor.

The protein localises to the cytoplasm. It catalyses the reaction [[Fe-S] cluster scaffold protein carrying a second [4Fe-4S](2+) cluster] + N(6)-octanoyl-L-lysyl-[protein] + 2 oxidized [2Fe-2S]-[ferredoxin] + 2 S-adenosyl-L-methionine + 4 H(+) = [[Fe-S] cluster scaffold protein] + N(6)-[(R)-dihydrolipoyl]-L-lysyl-[protein] + 4 Fe(3+) + 2 hydrogen sulfide + 2 5'-deoxyadenosine + 2 L-methionine + 2 reduced [2Fe-2S]-[ferredoxin]. It functions in the pathway protein modification; protein lipoylation via endogenous pathway; protein N(6)-(lipoyl)lysine from octanoyl-[acyl-carrier-protein]: step 2/2. Catalyzes the radical-mediated insertion of two sulfur atoms into the C-6 and C-8 positions of the octanoyl moiety bound to the lipoyl domains of lipoate-dependent enzymes, thereby converting the octanoylated domains into lipoylated derivatives. This is Lipoyl synthase from Francisella tularensis subsp. novicida (strain U112).